A 341-amino-acid chain; its full sequence is GTP-binding protein REM 2 (341 aa).

Over residues 1–13 (MHTDLDTDMDMDT) the composition is skewed to acidic residues. Disordered regions lie at residues 1–71 (MHTD…GSMP) and 84–106 (VDELDWPPQASPSGSSDSLGSGE). Positions 18-30 (LCSSSSRQASPLG) are enriched in polar residues. A Phosphoserine modification is found at Ser27. The span at 90–106 (PPQASPSGSSDSLGSGE) shows a compositional bias: low complexity. GTP contacts are provided by residues 122–129 (GESGVGKS), 230–233 (NKSD), and 261–262 (AA). Positions 282–309 (RGRGHAGGQRPEPSSPDGPAPPTRRESL) are disordered. The segment covering 294–303 (PSSPDGPAPP) has biased composition (pro residues). Residue Ser296 is modified to Phosphoserine.

This sequence belongs to the small GTPase superfamily. RGK family.

Its subcellular location is the cell membrane. Binds GTP saturably and exhibits a low intrinsic rate of GTP hydrolysis. This is GTP-binding protein REM 2 (Rem2) from Mus musculus (Mouse).